We begin with the raw amino-acid sequence, 306 residues long: Glutaminase (306 aa).

Substrate-binding residues include S64, N115, E159, N166, Y190, Y242, and V260.

The protein belongs to the glutaminase family. In terms of assembly, homotetramer.

It catalyses the reaction L-glutamine + H2O = L-glutamate + NH4(+). This is Glutaminase from Photobacterium profundum (strain SS9).